The sequence spans 167 residues: Photosystem I assembly protein Ycf3 (167 aa).

TPR repeat units follow at residues 35-68 (AFSY…ETDA), 72-105 (SYIL…NPSL), and 120-153 (GEQA…APTN).

This sequence belongs to the Ycf3 family.

It is found in the plastid. Its subcellular location is the chloroplast thylakoid membrane. Essential for the assembly of the photosystem I (PSI) complex. May act as a chaperone-like factor to guide the assembly of the PSI subunits. The sequence is that of Photosystem I assembly protein Ycf3 from Chlorella vulgaris (Green alga).